Here is a 620-residue protein sequence, read N- to C-terminus: Putative ribonuclease H protein At1g65750 (620 aa).

Positions 456–586 (CVGWVKVNTD…ADGLANYAFS (131 aa)) constitute an RNase H type-1 domain. Mg(2+)-binding residues include D465, E505, D529, and D578.

Mg(2+) serves as cofactor.

The enzyme catalyses Endonucleolytic cleavage to 5'-phosphomonoester.. This Arabidopsis thaliana (Mouse-ear cress) protein is Putative ribonuclease H protein At1g65750.